The sequence spans 320 residues: MSAGGEHLKDEGTRRQVVLAGGIAGLVSRFCVAPLDVVKIRLQLQIHSLSDPSSHRNVSGPIYKGTISTMRAIIREEGITGLWKGNIPAELMYVCYGGVQFTTYRTTTQALAQLPHRLPQPVESFVAGASAGGLATAATYPLDLLRTRFAAQGTERVYTSLLASVRDIARIEGPAGFFRGCSAAVGQIVPYMGLFFATYESLRPSLATVQDLPFGSGDALAGMIASVLAKTGVFPLDLVRKRLQVQGPTRSRYIHRNIPEYRGVFNTLALILRTQGVRGLYRGLTVSLFKAAPASAVTMWTYEETLRALQAMEVAAQKDE.

3 Solcar repeats span residues G12–A110, P119–S205, and P213–A308. Transmembrane regions (helical) follow at residues V17–L35, L91–T107, F125–L145, G180–A197, A219–V239, and G283–W300.

It belongs to the mitochondrial carrier (TC 2.A.29) family.

It localises to the mitochondrion inner membrane. In terms of biological role, mitochondrial transporter that mediates uptake of thiamine pyrophosphate (ThPP) into mitochondria. The polypeptide is Mitochondrial thiamine pyrophosphate carrier 1 (tpc1) (Aspergillus terreus (strain NIH 2624 / FGSC A1156)).